Consider the following 22-residue polypeptide: thr operon leader peptide (22 aa).

It belongs to the thr operon leader peptide family.

In terms of biological role, this protein is involved in control of the biosynthesis of threonine. This Klebsiella pneumoniae (strain 342) protein is thr operon leader peptide.